Reading from the N-terminus, the 329-residue chain is MGVKSVRFSIWFLFVVTDLVFCRTLSGDPDPCDATNQREFQKLRSDQITVLINGYSEYRIPLLQTIVASYSSSSIVSSILVLWGNPSTPDQLLDQLYQNLTQYSPGSASISLIQQSSSSLNARFLPRSSVDTRAVLICDDDVEIDQRSLEFAFSVWKSNPDRLVGTFVRSHGFDLQGKEWIYTVHPDKYSIVLTKFMMMKQDYLFEYSCKGGVEMEEMRMIVDQMRNCEDILMNFVAADRLRAGPIMVGAERVRDWGDARNEEVEERVRDVGLSSRRVEHRKRRGNCIREFHRVMGKMPLMYSYGKVVNSVGEQGLCRKAGKLVFCDRD.

The first 27 residues, 1–27, serve as a signal peptide directing secretion; it reads MGVKSVRFSIWFLFVVTDLVFCRTLSG. A glycan (N-linked (GlcNAc...) asparagine) is linked at N99. Residues 118-123, 139-141, R169, 226-230, and 271-284 contribute to the substrate site; these read SSLNAR, DDD, RNCED, and VGLSSRRVEHRKRR. Position 141 (D141) interacts with Mn(2+). C228 and C287 are disulfide-bonded. Residue D230 is part of the active site. Residues 268 to 284 are substrate binding; sequence VRDVGLSSRRVEHRKRR.

It belongs to the glycosyltransferase 64 family. Requires Mn(2+) as cofactor.

Its pathway is protein modification; protein glycosylation. Functionally, probable glycosyltransferase. This is Glycosyltransferase family protein 64 C3 from Arabidopsis thaliana (Mouse-ear cress).